A 244-amino-acid polypeptide reads, in one-letter code: Glutathione S-transferase theta-2B (244 aa).

In terms of domain architecture, GST N-terminal spans 2 to 82; it reads GLELFLDLVS…YLSCKYQTPD (81 aa). Glutathione-binding positions include 40-41, 53-54, 66-67, and 104-107; these read HK, KL, ES, and DCIR. The GST C-terminal domain occupies 88–224; sequence DLQARARVHE…SILEQAAKKT (137 aa).

Belongs to the GST superfamily. Theta family. In terms of assembly, homodimer. As to expression, expressed at low levels in liver. In lung, expressed at low levels in ciliated bronchiolar cells, alveolar macrophages and alveolar type II cells.

The protein localises to the cytoplasm. The protein resides in the cytosol. The enzyme catalyses RX + glutathione = an S-substituted glutathione + a halide anion + H(+). In terms of biological role, conjugation of reduced glutathione to a wide number of exogenous and endogenous hydrophobic electrophiles. Has a sulfatase activity. The chain is Glutathione S-transferase theta-2B (GSTT2B) from Homo sapiens (Human).